The chain runs to 206 residues: Probable thymidylate kinase (206 aa).

10-17 is an ATP binding site; that stretch reads GIDGSGKS.

The protein belongs to the thymidylate kinase family.

The enzyme catalyses dTMP + ATP = dTDP + ADP. This chain is Probable thymidylate kinase, found in Methanosarcina mazei (strain ATCC BAA-159 / DSM 3647 / Goe1 / Go1 / JCM 11833 / OCM 88) (Methanosarcina frisia).